The chain runs to 159 residues: Ribosomal RNA large subunit methyltransferase H (159 aa).

Residues Leu-76, Gly-108, and 127-132 each bind S-adenosyl-L-methionine; that span reads FSKMTF.

The protein belongs to the RNA methyltransferase RlmH family. Homodimer.

It is found in the cytoplasm. It carries out the reaction pseudouridine(1915) in 23S rRNA + S-adenosyl-L-methionine = N(3)-methylpseudouridine(1915) in 23S rRNA + S-adenosyl-L-homocysteine + H(+). Functionally, specifically methylates the pseudouridine at position 1915 (m3Psi1915) in 23S rRNA. This Clostridium botulinum (strain Kyoto / Type A2) protein is Ribosomal RNA large subunit methyltransferase H.